The primary structure comprises 205 residues: LexA repressor (205 aa).

A DNA-binding region (H-T-H motif) is located at residues 28 to 48 (RAEIATRLGFKSANAAEEHLK). Active-site for autocatalytic cleavage activity residues include Ser122 and Lys159.

This sequence belongs to the peptidase S24 family. As to quaternary structure, homodimer.

The enzyme catalyses Hydrolysis of Ala-|-Gly bond in repressor LexA.. Represses a number of genes involved in the response to DNA damage (SOS response), including recA and lexA. In the presence of single-stranded DNA, RecA interacts with LexA causing an autocatalytic cleavage which disrupts the DNA-binding part of LexA, leading to derepression of the SOS regulon and eventually DNA repair. The polypeptide is LexA repressor (Shewanella denitrificans (strain OS217 / ATCC BAA-1090 / DSM 15013)).